The sequence spans 304 residues: MKEGPISSSSNFNHVPVMGKEIIQSLKELPSELTKQGLIIDATIGGGGHSAQILENFPGIKIIGLDQDPMAREAASKKLIKFGTRIKIISTNFADFSLDEQAICVLADLGVSSHQLDEPSRGFSFRLNGPIDMRMNPKEGSSAAELIETLSEQNLADLIYELGEEKRSRRIARKIKNDLAENGPYSGTQDLSYAIAGCFPPKQRYGRIHPSTRTFQALRIAVNNELGSLESLLLKAPNWLLENGLFMVMSFHSLEDRRVKSSFKTDNRLKVLSKKPIRASPEEIELNPRSKSAKLRISAKKFLT.

S-adenosyl-L-methionine contacts are provided by residues 47-49 (GGH), D66, F93, D108, and Q115.

This sequence belongs to the methyltransferase superfamily. RsmH family.

It is found in the cytoplasm. It carries out the reaction cytidine(1402) in 16S rRNA + S-adenosyl-L-methionine = N(4)-methylcytidine(1402) in 16S rRNA + S-adenosyl-L-homocysteine + H(+). Its function is as follows. Specifically methylates the N4 position of cytidine in position 1402 (C1402) of 16S rRNA. The protein is Ribosomal RNA small subunit methyltransferase H of Prochlorococcus marinus (strain NATL1A).